The primary structure comprises 382 residues: D-galactonate dehydratase (382 aa).

Mg(2+) is bound at residue Asp-183. His-185 acts as the Proton donor in catalysis. Residues Glu-209 and Glu-235 each contribute to the Mg(2+) site. His-285 functions as the Proton acceptor in the catalytic mechanism.

The protein belongs to the mandelate racemase/muconate lactonizing enzyme family. GalD subfamily. Requires Mg(2+) as cofactor.

It catalyses the reaction D-galactonate = 2-dehydro-3-deoxy-D-galactonate + H2O. The protein operates within carbohydrate acid metabolism; D-galactonate degradation; D-glyceraldehyde 3-phosphate and pyruvate from D-galactonate: step 1/3. Catalyzes the dehydration of D-galactonate to 2-keto-3-deoxy-D-galactonate. The sequence is that of D-galactonate dehydratase from Salmonella dublin (strain CT_02021853).